A 386-amino-acid polypeptide reads, in one-letter code: Probable family 17 glucosidase SCW4 (386 aa).

Residues 1-19 form the signal peptide; sequence MRLSNLIASASLLSAATLA. Residues 20-30 constitute a propeptide that is removed on maturation; sequence APANHEHKDKR. The tract at residues 88–127 is disordered; it reads ENNSQVSAAASPASSSAATSTQSSSSSQASSSSSSGEDVS. Residue asparagine 89 is glycosylated (N-linked (GlcNAc...) asparagine). Glutamate 323 (nucleophile) is an active-site residue.

It belongs to the glycosyl hydrolase 17 family. N-glycosylated.

The protein resides in the secreted. Its subcellular location is the cell wall. Glucanases possibly play a role in cell expansion during growth, in cell-cell fusion during mating, and in spore release during sporulation. This chain is Probable family 17 glucosidase SCW4 (SCW4), found in Saccharomyces cerevisiae (strain ATCC 204508 / S288c) (Baker's yeast).